A 107-amino-acid chain; its full sequence is Ig kappa chain V region 4135 (107 aa).

The tract at residues 1 to 24 (ADIVMTQTPASVSEPVGGTVTIKC) is framework-1. The segment at 25-35 (QTSQSIDDYLS) is complementarity-determining-1. Residues 36–50 (WYQQKPGQPPKGLIY) form a framework-2 region. The segment at 51–57 (RASTLAS) is complementarity-determining-2. Residues 58-89 (GVPSRFRGSGSGTDFTLTISDLECADAATYYC) are framework-3. The tract at residues 90–96 (QSTYGVG) is complementarity-determining-3. Positions 97–106 (FGGGTEVVVK) are framework-4.

The polypeptide is Ig kappa chain V region 4135 (Oryctolagus cuniculus (Rabbit)).